The primary structure comprises 251 residues: PF03932 family protein CutC (251 aa).

The protein belongs to the CutC family.

The protein localises to the cytoplasm. The sequence is that of PF03932 family protein CutC from Erwinia tasmaniensis (strain DSM 17950 / CFBP 7177 / CIP 109463 / NCPPB 4357 / Et1/99).